A 312-amino-acid polypeptide reads, in one-letter code: Glyoxylate/hydroxypyruvate reductase A (312 aa).

R227 is an active-site residue. H275 serves as the catalytic Proton donor.

The protein belongs to the D-isomer specific 2-hydroxyacid dehydrogenase family. GhrA subfamily.

It localises to the cytoplasm. The catalysed reaction is glycolate + NADP(+) = glyoxylate + NADPH + H(+). It catalyses the reaction (R)-glycerate + NAD(+) = 3-hydroxypyruvate + NADH + H(+). The enzyme catalyses (R)-glycerate + NADP(+) = 3-hydroxypyruvate + NADPH + H(+). Catalyzes the NADPH-dependent reduction of glyoxylate and hydroxypyruvate into glycolate and glycerate, respectively. This Salmonella typhi protein is Glyoxylate/hydroxypyruvate reductase A.